Consider the following 596-residue polypeptide: Lamin-B2 (596 aa).

The interval 1–20 (MASLPPHAGPATPLSPTRLS) is disordered. The segment at 1–26 (MASLPPHAGPATPLSPTRLSRLQEKE) is head. Thr12 carries the phosphothreonine modification. Residue Ser15 is modified to Phosphoserine. One can recognise an IF rod domain in the interval 24 to 380 (EKEELRELND…KLLEGEEERL (357 aa)). The segment at 27-61 (ELRELNDRLAHYIDRVRALELENDRLLLRISEKEE) is coil 1A. Lys59 is modified (N6-acetyllysine; alternate). Residue Lys59 forms a Glycyl lysine isopeptide (Lys-Gly) (interchain with G-Cter in SUMO2); alternate linkage. The segment at 62–73 (VTTREVSGIKTL) is linker 1. Residues 74–207 (YESELADARR…AFSKSVFEEE (134 aa)) are coil 1B. Residues Lys173 and Lys233 each participate in a glycyl lysine isopeptide (Lys-Gly) (interchain with G-Cter in SUMO2) cross-link. The segment at 208–234 (VRETRRRHERRLVEVDSSRQQEYDFKM) is linker 2. The segment at 235 to 378 (AQALEDLRSQ…YRKLLEGEEE (144 aa)) is coil 2. Residues Ser294 and Ser385 each carry the phosphoserine modification. Positions 376–440 (EEERLKLSPS…ASRVSSGSRL (65 aa)) are disordered. A tail region spans residues 379-596 (RLKLSPSPSS…RTTSRGCRLM (218 aa)). Over residues 382-403 (LSPSPSSRITISRATSSSSSSS) the composition is skewed to low complexity. Thr391 carries an O-linked (GlcNAc) threonine glycan. Ser398, Ser400, and Ser402 each carry phosphoserine. Arg413 carries the post-translational modification Omega-N-methylarginine. The Nuclear localization signal motif lies at 415 to 420 (KRRRLE). The segment covering 425-439 (SGSPSRASRVSSGSR) has biased composition (low complexity). The 122-residue stretch at 438–559 (SRLAQQTVAT…VKAAKHSSVQ (122 aa)) folds into the LTD domain. Lys465 participates in a covalent cross-link: Glycyl lysine isopeptide (Lys-Gly) (interchain with G-Cter in SUMO2). A Phosphoserine modification is found at Ser473. The disordered stretch occupies residues 552 to 596 (AAKHSSVQGRENGEEEEEEEAEFGEEDLFHQQGDPRTTSRGCRLM). Residues 564–577 (GEEEEEEEAEFGEE) show a composition bias toward acidic residues. Residues 585-596 (DPRTTSRGCRLM) show a composition bias toward polar residues. The residue at position 593 (Cys593) is a Cysteine methyl ester. Cys593 is lipidated: S-farnesyl cysteine. Residues 594–596 (RLM) constitute a propeptide, removed in mature form.

Belongs to the intermediate filament family. As to quaternary structure, dimer. Lamin dimers then assemble into dimeric head-to-tail polymers. Ultimately, two head-to-tail polymers assemble laterally into a protofilament with a uniformly shaped rod of 3.5 nm in diameter. Interacts with TMEM43. Post-translationally, B-type lamins undergo a series of modifications, such as farnesylation and phosphorylation. Increased phosphorylation of the lamins occurs before envelope disintegration and probably plays a role in regulating lamin associations. Phosphorylation plays a key role in lamin organization, subcellular localization and nuclear envelope disintegration. Phosphorylation by CDK1 at Ser-15 and Ser-385 at the onset of mitosis drives lamin disassembly and nuclear envelope breakdown. In terms of tissue distribution, germ cell-specific.

The protein localises to the nucleus lamina. In terms of biological role, lamins are intermediate filament proteins that assemble into a filamentous meshwork, and which constitute the major components of the nuclear lamina, a fibrous layer on the nucleoplasmic side of the inner nuclear membrane. Lamins provide a framework for the nuclear envelope, bridging the nuclear envelope and chromatin, thereby playing an important role in nuclear assembly, chromatin organization, nuclear membrane and telomere dynamics. The structural integrity of the lamina is strictly controlled by the cell cycle, as seen by the disintegration and formation of the nuclear envelope in prophase and telophase, respectively. The protein is Lamin-B2 (Lmnb2) of Mus musculus (Mouse).